We begin with the raw amino-acid sequence, 96 residues long: Protein E7 (96 aa).

The tract at residues 1-37 is E7 terminal domain; sequence MIGKEVTLQDIVLELTEPQTVDLHCEEELPEQDTEVE. Residues 23 to 27 carry the LXCXE motif; interaction with host RB1 and TMEM173/STING motif; the sequence is LHCEE. Residues 49 to 86 fold into a zinc finger; it reads CGGGCGTRLRLFVAATQFGIRGLQDLLLEEVVILCPDC. The short motif at 68 to 76 is the Nuclear export signal element; that stretch reads IRGLQDLLL.

It belongs to the papillomaviridae E7 protein family. In terms of assembly, homodimer. Homooligomer. Interacts with host RB1; this interaction induces dissociation of RB1-E2F1 complex thereby disrupting RB1 activity. Interacts with host EP300; this interaction represses EP300 transcriptional activity. Interacts with protein E2; this interaction inhibits E7 oncogenic activity. Interacts with host TMEM173/STING; this interaction impairs the ability of TMEM173/STING to sense cytosolic DNA and promote the production of type I interferon (IFN-alpha and IFN-beta). In terms of processing, highly phosphorylated.

The protein resides in the host cytoplasm. Its subcellular location is the host nucleus. Its function is as follows. Plays a role in viral genome replication by driving entry of quiescent cells into the cell cycle. Stimulation of progression from G1 to S phase allows the virus to efficiently use the cellular DNA replicating machinery to achieve viral genome replication. E7 protein has both transforming and trans-activating activities. Induces the disassembly of the E2F1 transcription factor from RB1, with subsequent transcriptional activation of E2F1-regulated S-phase genes. Interferes with host histone deacetylation mediated by HDAC1 and HDAC2, leading to transcription activation. Also plays a role in the inhibition of both antiviral and antiproliferative functions of host interferon alpha. Interaction with host TMEM173/STING impairs the ability of TMEM173/STING to sense cytosolic DNA and promote the production of type I interferon (IFN-alpha and IFN-beta). The chain is Protein E7 from Homo sapiens (Human).